We begin with the raw amino-acid sequence, 238 residues long: Chromosome partition protein MukE (238 aa).

Positions 206 to 238 (EESSQSSFDLDENEKLSDISAEEQHELELEGDA) are disordered. Residues 218 to 238 (NEKLSDISAEEQHELELEGDA) show a composition bias toward basic and acidic residues.

The protein belongs to the MukE family. In terms of assembly, interacts, and probably forms a ternary complex, with MukF and MukB. The complex formation is stimulated by calcium or magnesium.

It is found in the cytoplasm. Its subcellular location is the nucleoid. Its function is as follows. Involved in chromosome condensation, segregation and cell cycle progression. May participate in facilitating chromosome segregation by condensation DNA from both sides of a centrally located replisome during cell division. Probably acts via its interaction with MukB and MukF. The polypeptide is Chromosome partition protein MukE (Aliivibrio salmonicida (strain LFI1238) (Vibrio salmonicida (strain LFI1238))).